We begin with the raw amino-acid sequence, 62 residues long: U8-theraphotoxin-Cg1a 1 (62 aa).

An N-terminal signal peptide occupies residues M1–A21. Positions N22–R29 are excised as a propeptide. 3 disulfides stabilise this stretch: C31-C46, C38-C51, and C45-C58.

It belongs to the neurotoxin 10 (Hwtx-1) family. 30 (Jztx-14) subfamily. Expressed by the venom gland.

It localises to the secreted. Probable ion channel inhibitor. The sequence is that of U8-theraphotoxin-Cg1a 1 from Chilobrachys guangxiensis (Chinese earth tiger tarantula).